The sequence spans 565 residues: Sulfite reductase [NADPH] hemoprotein beta-component (565 aa).

[4Fe-4S] cluster-binding residues include Cys429, Cys435, Cys474, and Cys478. Cys478 contacts siroheme.

It belongs to the nitrite and sulfite reductase 4Fe-4S domain family. In terms of assembly, alpha(8)-beta(8). The alpha component is a flavoprotein, the beta component is a hemoprotein. Siroheme is required as a cofactor. [4Fe-4S] cluster serves as cofactor.

It catalyses the reaction hydrogen sulfide + 3 NADP(+) + 3 H2O = sulfite + 3 NADPH + 4 H(+). It functions in the pathway sulfur metabolism; hydrogen sulfide biosynthesis; hydrogen sulfide from sulfite (NADPH route): step 1/1. Component of the sulfite reductase complex that catalyzes the 6-electron reduction of sulfite to sulfide. This is one of several activities required for the biosynthesis of L-cysteine from sulfate. This chain is Sulfite reductase [NADPH] hemoprotein beta-component, found in Shewanella baltica (strain OS223).